The following is a 586-amino-acid chain: CTP synthase 2 (586 aa).

In terms of domain architecture, Glutamine amidotransferase type-1 spans 300-554 (SIALVGKYTK…LAATGNLNAY (255 aa)). Active-site for GATase activity residues include Cys-399, His-526, and Glu-528. Residues 563-586 (SSDRYSDASDDSFSEPRIAELEIS) form a disordered region. A phosphoserine mark is found at Ser-568, Ser-571, and Ser-574.

It belongs to the CTP synthase family.

The catalysed reaction is UTP + L-glutamine + ATP + H2O = CTP + L-glutamate + ADP + phosphate + 2 H(+). It functions in the pathway pyrimidine metabolism; CTP biosynthesis via de novo pathway; CTP from UDP: step 2/2. Functionally, catalyzes the ATP-dependent amination of UTP to CTP with either L-glutamine or ammonia as the source of nitrogen. Constitutes the rate-limiting enzyme in the synthesis of cytosine nucleotides. The polypeptide is CTP synthase 2 (CTPS2) (Homo sapiens (Human)).